The following is a 129-amino-acid chain: MSRKESRVQAFQTLFQLEMKDSDLTINEAISFIKDDNPDLDFEFIHWLVSGVKDHEPVLDETISPYLKDWTIARLLKTDRIILRMATYEILHSDTPAKVVMNEAVELTKQFSDDDHYKFINGVLSNIKK.

Belongs to the NusB family.

In terms of biological role, involved in transcription antitermination. Required for transcription of ribosomal RNA (rRNA) genes. Binds specifically to the boxA antiterminator sequence of the ribosomal RNA (rrn) operons. The sequence is that of Transcription antitermination protein NusB from Staphylococcus aureus (strain N315).